A 500-amino-acid polypeptide reads, in one-letter code: Glycerol kinase (500 aa).

T13 contacts ADP. 3 residues coordinate ATP: T13, T14, and S15. T13 contributes to the sn-glycerol 3-phosphate binding site. R17 is a binding site for ADP. Sn-glycerol 3-phosphate is bound by residues R83, E84, Y135, and D244. Residues R83, E84, Y135, D244, and Q245 each contribute to the glycerol site. ADP-binding residues include T266, G309, G410, and N414. T266, G309, and G410 together coordinate ATP.

The protein belongs to the FGGY kinase family.

The catalysed reaction is glycerol + ATP = sn-glycerol 3-phosphate + ADP + H(+). It participates in polyol metabolism; glycerol degradation via glycerol kinase pathway; sn-glycerol 3-phosphate from glycerol: step 1/1. With respect to regulation, inhibited by fructose 1,6-bisphosphate (FBP). Functionally, key enzyme in the regulation of glycerol uptake and metabolism. Catalyzes the phosphorylation of glycerol to yield sn-glycerol 3-phosphate. The chain is Glycerol kinase from Chromobacterium violaceum (strain ATCC 12472 / DSM 30191 / JCM 1249 / CCUG 213 / NBRC 12614 / NCIMB 9131 / NCTC 9757 / MK).